Consider the following 351-residue polypeptide: DNA polymerase IV (351 aa).

A UmuC domain is found at 4–185 (IIHVDMDCFF…LPLAKIPGVG (182 aa)). D8 and D103 together coordinate Mg(2+). Residue E104 is part of the active site.

The protein belongs to the DNA polymerase type-Y family. In terms of assembly, monomer. It depends on Mg(2+) as a cofactor.

The protein resides in the cytoplasm. It catalyses the reaction DNA(n) + a 2'-deoxyribonucleoside 5'-triphosphate = DNA(n+1) + diphosphate. Functionally, poorly processive, error-prone DNA polymerase involved in untargeted mutagenesis. Copies undamaged DNA at stalled replication forks, which arise in vivo from mismatched or misaligned primer ends. These misaligned primers can be extended by PolIV. Exhibits no 3'-5' exonuclease (proofreading) activity. May be involved in translesional synthesis, in conjunction with the beta clamp from PolIII. The polypeptide is DNA polymerase IV (Salmonella choleraesuis (strain SC-B67)).